The chain runs to 418 residues: Ankyrin repeat and SOCS box protein 6 (418 aa).

ANK repeat units follow at residues 65-95 (EGVS…NLNF), 100-129 (TYYT…DINR), 134-164 (HESS…DVNA), 168-203 (NGKT…DVKA), 224-253 (CGDK…DPSE), and 258-287 (ESLT…AYNC). The region spanning 358–413 (ALHASLRQLESYPPPLKHLCRVSIRLCLRPWPVDTKVKALPLPDRLKWYLLSAHSD) is the SOCS box domain.

The protein belongs to the ankyrin SOCS box (ASB) family. As to quaternary structure, binds APS. Identified in a complex with ELOB and ELOC. Interacts with CUL5 and RNF7. Interacts with SQSTM1. Detected in adipocytes.

The protein localises to the cytoplasm. Its pathway is protein modification; protein ubiquitination. Its function is as follows. Probable substrate-recognition component of a SCF-like ECS (Elongin-Cullin-SOCS-box protein) E3 ubiquitin-protein ligase complex which mediates the ubiquitination and subsequent proteasomal degradation of target proteins. May play a role in the regulation of cell proliferation and autophagy by promoting the ubiquitination and degradation of SQSTM1. This chain is Ankyrin repeat and SOCS box protein 6 (Asb6), found in Mus musculus (Mouse).